A 346-amino-acid chain; its full sequence is Glucose-6-phosphatase 3 (346 aa).

Residues 1-25 (MESTLSAGIMMAEALQNQLPGLENM) are Lumenal-facing. A helical transmembrane segment spans residues 26–46 (WLWVTFLADPKNLFQFYFPAV). Over 47–56 (YYASRRLGIS) the chain is Cytoplasmic. Residues 57–77 (LFWIAFITEWLNLVFKWFLFG) form a helical membrane-spanning segment. The Lumenal portion of the chain corresponds to 78 to 115 (DRPFWWVHESGYSAQTPVQIHQFPSSCETGPGSPSGHC). Arginine 79 contacts substrate. Histidine 114 serves as the catalytic Proton donor. The helical transmembrane segment at 116–135 (MITGAALWPVMIAISSQVAS) threads the bilayer. Residues 136–140 (QTRSP) are Cytoplasmic-facing. A helical membrane pass occupies residues 141-162 (WVRVIPGLAYCTFLLAVGLSRV). Arginine 161 lines the substrate pocket. The Lumenal segment spans residues 163–167 (FLLAH). Histidine 167 functions as the Nucleophile in the catalytic mechanism. A helical transmembrane segment spans residues 168 to 186 (FPHQVLAGLLAGVILGWLL). Over 187 to 197 (SPRVPMERELS) the chain is Cytoplasmic. The helical transmembrane segment at 198 to 218 (FYGLTALTLMLGASLMYWTLF) threads the bilayer. Topologically, residues 219 to 254 (TLGLDLSWSINLASKWCDRPEWVLVDSRPFASLSRD) are lumenal. The chain crosses the membrane as a helical span at residues 255 to 273 (SGSALGLGIALHTPCYAQI). The Cytoplasmic portion of the chain corresponds to 274–283 (RRVHLGNGQK). The helical transmembrane segment at 284–304 (IACFVLAMGLLVFLEWLGHPP) threads the bilayer. Topologically, residues 305-307 (QIS) are lumenal. The helical transmembrane segment at 308 to 328 (LFYIFNFLKFTLWPCLVVALV) threads the bilayer. The Cytoplasmic portion of the chain corresponds to 329–346 (PWMVHTLSAQEAPPIRSS).

Belongs to the glucose-6-phosphatase family. As to expression, expressed in liver and kidney. It is the major glucose-6-phosphatase expressed in the small intestine.

The protein localises to the endoplasmic reticulum membrane. The enzyme catalyses D-glucose 6-phosphate + H2O = D-glucose + phosphate. It participates in carbohydrate biosynthesis; gluconeogenesis. Inhibited by vanadate. Functionally, hydrolyzes glucose-6-phosphate to glucose in the endoplasmic reticulum. May form with the glucose-6-phosphate transporter (SLC37A4/G6PT) a ubiquitously expressed complex responsible for glucose production through glycogenolysis and gluconeogenesis. Probably required for normal neutrophil function. This chain is Glucose-6-phosphatase 3 (G6pc3), found in Rattus norvegicus (Rat).